The primary structure comprises 182 residues: uncharacterized protein (182 aa).

The protein resides in the mitochondrion. This is an uncharacterized protein from Schizosaccharomyces pombe (strain 972 / ATCC 24843) (Fission yeast).